A 165-amino-acid polypeptide reads, in one-letter code: Protein phosphatase 1 regulatory subunit 14C (165 aa).

Residues 1-12 (MSVATGSSETAG) are compositionally biased toward low complexity. The tract at residues 1-73 (MSVATGSSET…QRRHQQGKVT (73 aa)) is disordered. Ser2 carries the N-acetylserine modification. Ser25 is modified (phosphoserine). An Omega-N-methylarginine modification is found at Arg27. Ser33 is subject to Phosphoserine. A compositionally biased stretch (low complexity) spans 35–63 (GSSSGSGSSREDSAPVATAAAAGQVQQQQ). Phosphothreonine; by ILK1 is present on Thr73.

It belongs to the PP1 inhibitor family. In terms of processing, has over 600-fold higher inhibitory activity when phosphorylated, creating a molecular switch for regulating the phosphorylation status of PPP1CA substrates and smooth muscle contraction. The main inhibitory site appears to be Thr-73. As to expression, detected in breast cancer.

The protein resides in the cytoplasm. Its subcellular location is the membrane. Its function is as follows. Inhibitor of the PP1 regulatory subunit PPP1CA. The chain is Protein phosphatase 1 regulatory subunit 14C (PPP1R14C) from Homo sapiens (Human).